A 463-amino-acid polypeptide reads, in one-letter code: Cysteine--tRNA ligase (463 aa).

Cys-33 contributes to the Zn(2+) binding site. A 'HIGH' region motif is present at residues 35-45 (PTVYDFAHIGN). 3 residues coordinate Zn(2+): Cys-221, His-246, and Glu-250. The short motif at 279-283 (KMSKS) is the 'KMSKS' region element. Lys-282 contacts ATP.

Belongs to the class-I aminoacyl-tRNA synthetase family. In terms of assembly, monomer. The cofactor is Zn(2+).

Its subcellular location is the cytoplasm. The catalysed reaction is tRNA(Cys) + L-cysteine + ATP = L-cysteinyl-tRNA(Cys) + AMP + diphosphate. This Rhizobium rhizogenes (strain K84 / ATCC BAA-868) (Agrobacterium radiobacter) protein is Cysteine--tRNA ligase.